The following is a 574-amino-acid chain: K(+)/H(+) antiporter NhaP2 (574 aa).

13 helical membrane passes run 6 to 26 (INSF…LSPM), 30 to 50 (LGIP…EDGL), 58 to 78 (YSTA…DGGM), 87 to 107 (VALW…TSIT), 109 to 129 (LMAA…GAIV), 173 to 193 (IAIL…VSFI), 196 to 216 (FGLG…LVNL), 219 to 239 (LAEG…YAVS), 242 to 262 (LGGS…NKPT), 271 to 291 (VLDG…GLLL), 299 to 319 (ILLP…PLAV), 335 to 355 (WFIS…VFPM), and 359 to 379 (LPGA…SLLI). Positions 405 to 486 (SGVEIYPSSE…LDALSHLFSQ (82 aa)) constitute an RCK C-terminal domain.

This sequence belongs to the monovalent cation:proton antiporter 1 (CPA1) transporter (TC 2.A.36) family. NhaP2 subfamily.

It localises to the cell inner membrane. The catalysed reaction is K(+)(in) + H(+)(out) = K(+)(out) + H(+)(in). Functionally, k(+)/H(+) antiporter that extrudes potassium in exchange for external protons and maintains the internal concentration of potassium under toxic levels. The polypeptide is K(+)/H(+) antiporter NhaP2 (Shewanella sp. (strain W3-18-1)).